The sequence spans 264 residues: Merozoite surface protein 2 (264 aa).

An N-terminal signal peptide occupies residues 1–20 (MKVIKTLSIINFFIFVTFNI). N-linked (GlcNAc...) asparagine glycans are attached at residues N22 and N36. The tract at residues 44-190 (ANEGSNTNSV…PQTAENENPA (147 aa)) is polymorphic region. Positions 46 to 225 (EGSNTNSVGA…DSQKECTDGN (180 aa)) are disordered. Repeat copies occupy residues 60–91 (ADTI…TPTA) and 92–123 (ADTI…TPTA). The interval 60 to 123 (ADTIASGSQR…GESQTTTPTA (64 aa)) is 2 X 32 AA perfects repeats. Positions 70–81 (STNSASTSTTNN) are enriched in low complexity. Residues 82 to 101 (GESQTTTPTAADTIASGSQR) show a composition bias toward polar residues. Positions 102-145 (STNSASTSTTNNGESQTTTPTAADTPTTTESNSPSPPITTTESS) are enriched in low complexity. N152 is a glycosylation site (N-linked (GlcNAc...) asparagine). A compositionally biased stretch (basic and acidic residues) spans 154 to 166 (TDGKGEESEKQNE). N168 and N213 each carry an N-linked (GlcNAc...) asparagine glycan. C221 and C229 are oxidised to a cystine. Residues N237 and N238 are each glycosylated (N-linked (GlcNAc...) asparagine). Residue N238 is the site of GPI-anchor amidated asparagine attachment. The propeptide at 239-264 (SSNIASINKFVVLISATLVLSFAIFI) is removed in mature form.

It is found in the cell membrane. Functionally, may play a role in the merozoite attachment to the erythrocyte. The chain is Merozoite surface protein 2 from Plasmodium falciparum (isolate fid3 / India).